Reading from the N-terminus, the 268-residue chain is Stomatin homolog PYRAB06580 (268 aa).

A helical membrane pass occupies residues 1–21 (MILPTNFFVTTIILLFILIFL). Coiled coils occupy residues 125-152 (GQAHLDELLSERDKLNMQLQRIIDEATD) and 178-213 (KQAEAERERRARITLAEAERQAAEKLREAAEIISEH).

Belongs to the band 7/mec-2 family. Homotrimer.

The protein resides in the membrane. This Pyrococcus abyssi (strain GE5 / Orsay) protein is Stomatin homolog PYRAB06580.